A 187-amino-acid polypeptide reads, in one-letter code: Pumilio homolog 26 (187 aa).

The Pumilio 1; degenerate repeat unit spans residues 20 to 42 (VATEFLRVSNDVAELHKLSSKLT). One copy of the Pumilio 2; degenerate repeat lies at 43-78 (SDPYLFVEFVKTIRGFLSVQTALGLSGEIDTVFLQV). A Pumilio 3; degenerate repeat occupies 79–116 (IKGWFPDLITETFSFLIVVRIINLFNKRANSKVYPDIL). A Pumilio 4; degenerate repeat occupies 117-154 (RRIGNNALYLTRNPLRGICLVEKAINVRDPDCTVFIAL). The Pumilio 5 repeat unit spans residues 155-187 (KLHSHYVELSFEELGSNIVEKLLSVGESGICGV).

Its subcellular location is the cytoplasm. Functionally, sequence-specific RNA-binding protein that regulates translation and mRNA stability by binding the 3'-UTR of target mRNAs. The chain is Pumilio homolog 26 (APUM26) from Arabidopsis thaliana (Mouse-ear cress).